A 244-amino-acid chain; its full sequence is Large ribosomal subunit protein uL30B (244 aa).

A compositionally biased stretch (polar residues) spans 1–11 (MSTEKILTPES). The interval 1-21 (MSTEKILTPESQLKKTKAQQK) is disordered.

Belongs to the universal ribosomal protein uL30 family. Component of the large ribosomal subunit (LSU). Mature yeast ribosomes consist of a small (40S) and a large (60S) subunit. The 40S small subunit contains 1 molecule of ribosomal RNA (18S rRNA) and 33 different proteins (encoded by 57 genes). The large 60S subunit contains 3 rRNA molecules (25S, 5.8S and 5S rRNA) and 46 different proteins (encoded by 81 genes).

Its subcellular location is the cytoplasm. Its function is as follows. Component of the ribosome, a large ribonucleoprotein complex responsible for the synthesis of proteins in the cell. The small ribosomal subunit (SSU) binds messenger RNAs (mRNAs) and translates the encoded message by selecting cognate aminoacyl-transfer RNA (tRNA) molecules. The large subunit (LSU) contains the ribosomal catalytic site termed the peptidyl transferase center (PTC), which catalyzes the formation of peptide bonds, thereby polymerizing the amino acids delivered by tRNAs into a polypeptide chain. The nascent polypeptides leave the ribosome through a tunnel in the LSU and interact with protein factors that function in enzymatic processing, targeting, and the membrane insertion of nascent chains at the exit of the ribosomal tunnel. The polypeptide is Large ribosomal subunit protein uL30B (Saccharomyces cerevisiae (strain ATCC 204508 / S288c) (Baker's yeast)).